The primary structure comprises 1653 residues: Protein TOPAZ1 (1653 aa).

5 disordered regions span residues 1–88, 212–238, 553–591, 855–893, and 919–942; these read MPRA…PGID, GCMHVPENSSKSKKENPRSLIDKTDPS, KMKSEELSRSASEVVSNTTEDTSLTNMTHNLTGSKKKDR, PNVAEEHQSTDSKHMELPDKKEPSNALRELPVPDPGSMK, and EVTHETSSNEKPRGLSEQTKSSDL. Composition is skewed to basic and acidic residues over residues 58-69 and 221-236; these read SGREEVESDKSA and SKSKKENPRSLIDKTD. Residues 561-585 are compositionally biased toward polar residues; it reads RSASEVVSNTTEDTSLTNMTHNLTG. Basic and acidic residues-rich tracts occupy residues 858-877 and 920-942; these read AEEHQSTDSKHMELPDKKEP and VTHETSSNEKPRGLSEQTKSSDL.

Its subcellular location is the cytoplasm. The protein localises to the cytosol. Functionally, important for normal spermatogenesis and male fertility. Specifically required for progression to the post-meiotic stages of spermatocyte development. Seems to be necessary for normal expression levels of a number of testis-expressed gene transcripts, although its role in this process is unclear. This Bos taurus (Bovine) protein is Protein TOPAZ1 (TOPAZ1).